A 325-amino-acid polypeptide reads, in one-letter code: 8-oxo-dGDP phosphatase NUDT18 (325 aa).

Residues 38-163 enclose the Nudix hydrolase domain; the sequence is NVCYIVGAVI…DILSLIDAGL (126 aa). A Mg(2+)-binding site is contributed by Leu-55. The Nudix box motif lies at 73–94; the sequence is GRMEECESILEALQREVREEAG.

Belongs to the Nudix hydrolase family. Mn(2+) is required as a cofactor. It depends on Mg(2+) as a cofactor.

The catalysed reaction is 8-oxo-dGDP + H2O = 8-oxo-dGMP + phosphate + H(+). It catalyses the reaction 8-oxo-dADP + H2O = 8-oxo-dAMP + phosphate + H(+). It carries out the reaction 2-oxo-dADP + H2O = 2-oxo-dAMP + phosphate + H(+). The enzyme catalyses 8-oxo-GDP + H2O = 8-oxo-GMP + phosphate + H(+). Mediates the hydrolysis of oxidized nucleoside diphosphate derivatives. Hydrolyzes 8-oxo-7,8-dihydroguanine (8-oxo-Gua)-containing deoxyribo- and ribonucleoside diphosphates to the monophosphates. Hydrolyzes 8-oxo-dGDP and 8-oxo-GDP with the same efficiencies. Also hydrolyzes 8-OH-dADP and 2-OH-dADP. Exhibited no or minimal hydrolysis activity against 8-oxo-dGTP, 8-oxo-GTP, dGTP, GTP, dGDP and GDP. Probably removes oxidized guanine nucleotides from both the DNA and RNA precursor pools. The polypeptide is 8-oxo-dGDP phosphatase NUDT18 (nudt18) (Danio rerio (Zebrafish)).